A 132-amino-acid chain; its full sequence is UPF0719 inner membrane protein YjfL (132 aa).

The Periplasmic portion of the chain corresponds to 1 to 6 (MHILDS). The chain crosses the membrane as a helical span at residues 7–27 (LLAFSAYFFIGVAMVIIFLFI). Topologically, residues 28 to 46 (YSKITPHNEWQLIKNNNTA) are cytoplasmic. Residues 47–67 (ASLAFSGTLLGYVIPLSSAAI) traverse the membrane as a helical segment. Over 68–71 (NAVS) the chain is Periplasmic. A helical membrane pass occupies residues 72–92 (IPDYFAWGGIALVIQLLVFAG). Topologically, residues 93 to 109 (VRLYMPALSEKIINHNT) are cytoplasmic. The chain crosses the membrane as a helical span at residues 110 to 130 (AAGMFMGTAALAGGIFNAACM). At 131–132 (TW) the chain is on the periplasmic side.

This sequence belongs to the UPF0719 family.

It is found in the cell inner membrane. The polypeptide is UPF0719 inner membrane protein YjfL (yjfL) (Escherichia coli O157:H7).